We begin with the raw amino-acid sequence, 123 residues long: Protein Wnt-7a (123 aa).

Serine 1 carries O-palmitoleoyl serine; by PORCN lipidation. Residues valine 33–threonine 61 are disordered linker. An intrachain disulfide couples cysteine 89 to cysteine 104. N-linked (GlcNAc...) asparagine glycosylation is found at asparagine 90 and asparagine 96.

It belongs to the Wnt family. As to quaternary structure, forms a soluble 1:1 complex with AFM; this prevents oligomerization and is required for prolonged biological activity. The complex with AFM may represent the physiological form in body fluids. Interacts with FZD5. Interacts with PORCN. In terms of processing, palmitoleoylation is required for efficient binding to frizzled receptors. Depalmitoleoylation leads to Wnt signaling pathway inhibition.

The protein localises to the secreted. The protein resides in the extracellular space. It localises to the extracellular matrix. Its function is as follows. Ligand for members of the frizzled family of seven transmembrane receptors that functions in the canonical Wnt/beta-catenin signaling pathway. Plays an important role in embryonic development, including dorsal versus ventral patterning during limb development, skeleton development and urogenital tract development. Required for central nervous system (CNS) angiogenesis and blood-brain barrier regulation. In Alopias vulpinus (Common thresher shark), this protein is Protein Wnt-7a (WNT-7A).